Here is a 208-residue protein sequence, read N- to C-terminus: Octanoyltransferase (208 aa).

The region spanning 31 to 208 (GSEREMVWLL…LKKEFYKVFA (178 aa)) is the BPL/LPL catalytic domain. Residues 70–77 (RGGKYSYH), 142–144 (AFG), and 155–157 (GVA) contribute to the substrate site. Cysteine 173 serves as the catalytic Acyl-thioester intermediate.

It belongs to the LipB family.

It localises to the cytoplasm. The catalysed reaction is octanoyl-[ACP] + L-lysyl-[protein] = N(6)-octanoyl-L-lysyl-[protein] + holo-[ACP] + H(+). It participates in protein modification; protein lipoylation via endogenous pathway; protein N(6)-(lipoyl)lysine from octanoyl-[acyl-carrier-protein]: step 1/2. Catalyzes the transfer of endogenously produced octanoic acid from octanoyl-acyl-carrier-protein onto the lipoyl domains of lipoate-dependent enzymes. Lipoyl-ACP can also act as a substrate although octanoyl-ACP is likely to be the physiological substrate. The chain is Octanoyltransferase from Anaplasma phagocytophilum (strain HZ).